Consider the following 415-residue polypeptide: Palmitoyl-acyl carrier protein thioesterase, chloroplastic (415 aa).

Low complexity-rich tracts occupy residues 1–16 (MVAT…LPSA) and 24–41 (KLGN…KSTP). The transit peptide at 1 to 60 (MVATAASSAFFPLPSADTSSRPGKLGNKPSSLSPLKPKSTPNGGLQVKANASAPPKINGS) directs the protein to the chloroplast. The disordered stretch occupies residues 1–81 (MVATAASSAF…QEDAHSAPPP (81 aa)). Residues N314, H316, and C351 contribute to the active site.

Belongs to the acyl-ACP thioesterase family.

The protein localises to the plastid. It localises to the chloroplast. It carries out the reaction hexadecanoyl-[ACP] + H2O = hexadecanoate + holo-[ACP] + H(+). Functionally, plays an essential role in chain termination during de novo fatty acid synthesis. High thioesterase activity for palmitoyl-ACP versus other acyl-ACPs. In Cuphea hookeriana (Cigar plant), this protein is Palmitoyl-acyl carrier protein thioesterase, chloroplastic (FATB1).